We begin with the raw amino-acid sequence, 244 residues long: Ribosome maturation factor RimM (244 aa).

The segment at 1 to 58 (MSERDSGSSGPVKAKAAAPRAKTSGQAPFGAFVRKPVEKTEGKAKANAANAGSGATEM) is disordered. Low complexity predominate over residues 13–22 (KAKAAAPRAK). Positions 35–44 (KPVEKTEGKA) are enriched in basic and acidic residues. Residues 45-57 (KANAANAGSGATE) are compositionally biased toward low complexity. In terms of domain architecture, PRC barrel spans 163–244 (ADEFYWVDLL…QITVDWEADY (82 aa)).

Belongs to the RimM family. As to quaternary structure, binds ribosomal protein uS19.

The protein resides in the cytoplasm. Functionally, an accessory protein needed during the final step in the assembly of 30S ribosomal subunit, possibly for assembly of the head region. Essential for efficient processing of 16S rRNA. May be needed both before and after RbfA during the maturation of 16S rRNA. It has affinity for free ribosomal 30S subunits but not for 70S ribosomes. This is Ribosome maturation factor RimM from Paraburkholderia xenovorans (strain LB400).